The chain runs to 302 residues: Oxygen-dependent coproporphyrinogen-III oxidase (302 aa).

Serine 94 serves as a coordination point for substrate. Residues histidine 98 and histidine 108 each coordinate a divalent metal cation. Catalysis depends on histidine 108, which acts as the Proton donor. 110–112 (NVR) contacts substrate. Residues histidine 147 and histidine 177 each coordinate a divalent metal cation. The tract at residues 242–277 (YVEFNLVYDRGTLFGLQTGGRTESILMSMPPLARWE) is important for dimerization. 260–262 (GGR) lines the substrate pocket.

The protein belongs to the aerobic coproporphyrinogen-III oxidase family. In terms of assembly, homodimer. It depends on a divalent metal cation as a cofactor.

It is found in the cytoplasm. It catalyses the reaction coproporphyrinogen III + O2 + 2 H(+) = protoporphyrinogen IX + 2 CO2 + 2 H2O. It functions in the pathway porphyrin-containing compound metabolism; protoporphyrin-IX biosynthesis; protoporphyrinogen-IX from coproporphyrinogen-III (O2 route): step 1/1. In terms of biological role, involved in the heme biosynthesis. Catalyzes the aerobic oxidative decarboxylation of propionate groups of rings A and B of coproporphyrinogen-III to yield the vinyl groups in protoporphyrinogen-IX. The chain is Oxygen-dependent coproporphyrinogen-III oxidase from Aeromonas salmonicida (strain A449).